A 420-amino-acid chain; its full sequence is Glucose-1-phosphate adenylyltransferase (420 aa).

Alpha-D-glucose 1-phosphate is bound by residues Tyr107, Gly172, Glu187–Lys188, and Ser205.

It belongs to the bacterial/plant glucose-1-phosphate adenylyltransferase family. Homotetramer.

The enzyme catalyses alpha-D-glucose 1-phosphate + ATP + H(+) = ADP-alpha-D-glucose + diphosphate. Its pathway is glycan biosynthesis; glycogen biosynthesis. Functionally, involved in the biosynthesis of ADP-glucose, a building block required for the elongation reactions to produce glycogen. Catalyzes the reaction between ATP and alpha-D-glucose 1-phosphate (G1P) to produce pyrophosphate and ADP-Glc. This is Glucose-1-phosphate adenylyltransferase from Rhizobium johnstonii (strain DSM 114642 / LMG 32736 / 3841) (Rhizobium leguminosarum bv. viciae).